The primary structure comprises 355 residues: Homeotic protein knotted-1 (355 aa).

Residues K205–E233 are disordered. An ELK domain is found at E236 to L256. Residues S257 to S320 constitute a DNA-binding region (homeobox; TALE-type).

This sequence belongs to the TALE/KNOX homeobox family. Expressed in the apical meristems, in the newly emerged lateral primordia in the floral bud, in their vascular bundles and in the cortex parenchyma of the floral pedicle. Also present in the lateral tips of leaf primordia.

It localises to the nucleus. Functionally, appears to be involved in meristem formation and in the regulation of leaf morphology. Misexpression makes the leaf more compound which is always associated with growth retardation and loss of apical dominance, resulting in dwarfed, bushy plants. Probably binds to the DNA sequence 5'-TGAC-3'. The protein is Homeotic protein knotted-1 (KN1) of Solanum lycopersicum (Tomato).